Consider the following 153-residue polypeptide: Ribosome maturation factor RimP (153 aa).

The protein belongs to the RimP family.

It is found in the cytoplasm. In terms of biological role, required for maturation of 30S ribosomal subunits. The chain is Ribosome maturation factor RimP from Solibacter usitatus (strain Ellin6076).